The following is a 204-amino-acid chain: High frequency lysogenization protein HflD homolog (204 aa).

Belongs to the HflD family.

It is found in the cytoplasm. It localises to the cell inner membrane. The sequence is that of High frequency lysogenization protein HflD homolog from Xylella fastidiosa (strain M23).